Reading from the N-terminus, the 180-residue chain is UPF0102 protein Tery_0733 (180 aa).

The protein belongs to the UPF0102 family.

The protein is UPF0102 protein Tery_0733 of Trichodesmium erythraeum (strain IMS101).